Consider the following 175-residue polypeptide: uncharacterized protein (175 aa).

The first 23 residues, 1–23 (MILVLLLILIAFLYIYFPSSLNQ), serve as a signal peptide directing secretion.

This is an uncharacterized protein from Invertebrate iridescent virus 6 (IIV-6).